The following is a 1201-amino-acid chain: DNA-directed RNA polymerase subunit beta' (1201 aa).

Residues Cys60, Cys62, Cys75, and Cys78 each contribute to the Zn(2+) site. Mg(2+)-binding residues include Asp449, Asp451, and Asp453. Cys818, Cys892, Cys899, and Cys902 together coordinate Zn(2+).

Belongs to the RNA polymerase beta' chain family. The RNAP catalytic core consists of 2 alpha, 1 beta, 1 beta' and 1 omega subunit. When a sigma factor is associated with the core the holoenzyme is formed, which can initiate transcription. Requires Mg(2+) as cofactor. Zn(2+) is required as a cofactor.

It catalyses the reaction RNA(n) + a ribonucleoside 5'-triphosphate = RNA(n+1) + diphosphate. In terms of biological role, DNA-dependent RNA polymerase catalyzes the transcription of DNA into RNA using the four ribonucleoside triphosphates as substrates. This chain is DNA-directed RNA polymerase subunit beta', found in Listeria monocytogenes serotype 4b (strain F2365).